The primary structure comprises 199 residues: Recombination protein RecR (199 aa).

Residues 58–73 (CKKCFNLTSEEECEIC) form a C4-type zinc finger. The 95-residue stretch at 81–175 (KIICVVAETK…KVTRIAYGLP (95 aa)) folds into the Toprim domain.

This sequence belongs to the RecR family.

Its function is as follows. May play a role in DNA repair. It seems to be involved in an RecBC-independent recombinational process of DNA repair. It may act with RecF and RecO. The sequence is that of Recombination protein RecR from Prochlorococcus marinus subsp. pastoris (strain CCMP1986 / NIES-2087 / MED4).